Consider the following 281-residue polypeptide: Putative phosphatase/phosphodiesterase MG246 (281 aa).

Positions 11, 42, 43, and 70 each coordinate Fe cation. Histidine 71 acts as the Proton donor in catalysis. Residues histidine 157, histidine 182, and histidine 184 each coordinate Fe cation.

Belongs to the YmdB-like family. Fe(3+) is required as a cofactor.

The polypeptide is Putative phosphatase/phosphodiesterase MG246 (Mycoplasma genitalium (strain ATCC 33530 / DSM 19775 / NCTC 10195 / G37) (Mycoplasmoides genitalium)).